Consider the following 191-residue polypeptide: MIEIPSDLHKDLVPLVFLLGDWAGAGVHDFPGAEKCNFGQEVSFTHDGRDFLEYQSHTWVLDNDGNKVRPLESEHGFWRIDANRKVEVTMTRDDGVIEIWYGELADQKPQIDLVTDAVARTAASQPYTGGKRLYGYVKSDLMWVGEKQTPEVELRPYMSAHLKKVVTPEDVERWAKALPDDMPDDGIAFFK.

The short motif at 20–26 (GDWAGAG) is the GXWXGXG element.

The protein belongs to the nitrobindin family.

The protein is Ferric nitrobindin-like protein of Streptomyces coelicolor (strain ATCC BAA-471 / A3(2) / M145).